A 419-amino-acid chain; its full sequence is N-acylglucosamine 2-epimerase (419 aa).

Residues 185-206 form a leucine-zipper region; sequence LLNLVEQLGEEDEEMTDKYAEL. Residue S418 is modified to Phosphoserine.

This sequence belongs to the N-acylglucosamine 2-epimerase family. In terms of assembly, homodimer. Forms a heterodimer with renin and inhibits its activity. Kidney, adrenal gland, brain, lung, spleen, ovary, testis and heart.

It catalyses the reaction an N-acyl-D-glucosamine = an N-acyl-D-mannosamine. It participates in amino-sugar metabolism; N-acetylneuraminate degradation. Its function is as follows. Catalyzes the interconversion of N-acetylglucosamine to N-acetylmannosamine. Involved in the N-glycolylneuraminic acid (Neu5Gc) degradation pathway. This Rattus norvegicus (Rat) protein is N-acylglucosamine 2-epimerase (Renbp).